Reading from the N-terminus, the 443-residue chain is Threonine/serine transporter TdcC (443 aa).

11 helical membrane-spanning segments follow: residues 24 to 44, 45 to 65, 95 to 115, 140 to 160, 163 to 183, 207 to 227, 259 to 279, 319 to 339, 363 to 383, 385 to 405, and 423 to 443; these read WVLGLFGTAIGAGVLFFPISA, GIGGLLPIIFMLILAFPIAFF, VGGVVITFLYFFAICPLLWIY, VVALAILLVMAFFIYFGKDLM, VMGYLVFPFITCLVLISLSLI, ILVTVWLGIAIMVFSFNFSPI, ASVLMVVVVMFFAFSCLFTLS, ASIIALVAIFKSFFGHYLGTL, LNMISMVIIMGSTWVIAYINP, ILDLIGAMGAPIIAALLCLLP, and SNYFVTIIGLLTILNIVYQLM.

This sequence belongs to the amino acid/polyamine transporter 2 family. SdaC/TdcC subfamily.

The protein resides in the cell inner membrane. It carries out the reaction L-threonine(in) + H(+)(in) = L-threonine(out) + H(+)(out). The enzyme catalyses L-serine(in) + H(+)(in) = L-serine(out) + H(+)(out). In terms of biological role, involved in the import of threonine and serine into the cell, with the concomitant import of a proton (symport system). The protein is Threonine/serine transporter TdcC of Edwardsiella tarda.